The primary structure comprises 194 residues: 7-methyl-GTP pyrophosphatase (194 aa).

Residue D71 is the Proton acceptor of the active site.

It belongs to the Maf family. YceF subfamily. A divalent metal cation is required as a cofactor.

It localises to the cytoplasm. The enzyme catalyses N(7)-methyl-GTP + H2O = N(7)-methyl-GMP + diphosphate + H(+). Functionally, nucleoside triphosphate pyrophosphatase that hydrolyzes 7-methyl-GTP (m(7)GTP). May have a dual role in cell division arrest and in preventing the incorporation of modified nucleotides into cellular nucleic acids. This chain is 7-methyl-GTP pyrophosphatase, found in Aromatoleum aromaticum (strain DSM 19018 / LMG 30748 / EbN1) (Azoarcus sp. (strain EbN1)).